The following is a 340-amino-acid chain: Uroporphyrinogen decarboxylase (340 aa).

Substrate is bound by residues 21–25 (RQAGR), F40, D71, Y148, S203, and H316.

The protein belongs to the uroporphyrinogen decarboxylase family. As to quaternary structure, homodimer.

The protein localises to the cytoplasm. The catalysed reaction is uroporphyrinogen III + 4 H(+) = coproporphyrinogen III + 4 CO2. It functions in the pathway porphyrin-containing compound metabolism; protoporphyrin-IX biosynthesis; coproporphyrinogen-III from 5-aminolevulinate: step 4/4. In terms of biological role, catalyzes the decarboxylation of four acetate groups of uroporphyrinogen-III to yield coproporphyrinogen-III. In Campylobacter jejuni subsp. jejuni serotype O:2 (strain ATCC 700819 / NCTC 11168), this protein is Uroporphyrinogen decarboxylase.